The primary structure comprises 474 residues: MAAQPKDLSHHLSVESASRKQSPLKAVALSKSSRNIKIISLAGGLPNPEYFPIREMDAEIPAINSWKKDSSNSGKLDTVSVPMSSSDSDVLPLSVALQYGQGSGAALLSQFLKEHTRIIHNPPYEGWNIIMTTGNTSCLDIALRMLTNRGDSILVEKYSFPSALQSMRPLGLSCIPIDMDQFGFLPESMDDILTNWDATSYGSPKPHVLYTIPTGQNPTGSTLSVERRKQIYTLAQKHDIIILEDEPYYYLQMDAYEGKPEAADKAFTNEQFVKELIPSFLSMDVDGRVIRMDSLSKVVAPGSRVGWFTAQPLFIERGLRAAETATQSASGISQGILYAMFKHWGQDGYLEWLKHIRYSYTLRRNYLLYAMDTYLPKSVCSYIPPVAGMFIWFEVDKSRYIHADKNESIPEIESKIHAEAVEEGVNLACGNWFVVDPRVNDKIFFRVTFAHAELEEFNVAIERFAGVLKNNFKC.

Belongs to the class-I pyridoxal-phosphate-dependent aminotransferase family. It depends on pyridoxal 5'-phosphate as a cofactor.

The protein resides in the cytoplasm. The enzyme catalyses an aromatic L-alpha-amino acid + 2-oxoglutarate = an aromatic oxo-acid + L-glutamate. Functionally, has aromatic amino acid transaminase activity. This chain is Aromatic amino acid aminotransferase C56E4.03, found in Schizosaccharomyces pombe (strain 972 / ATCC 24843) (Fission yeast).